Reading from the N-terminus, the 153-residue chain is UPF0260 protein YcgN (153 aa).

It belongs to the UPF0260 family.

In Escherichia coli O6:K15:H31 (strain 536 / UPEC), this protein is UPF0260 protein YcgN.